A 126-amino-acid polypeptide reads, in one-letter code: Protein ApaG (126 aa).

An ApaG domain is found at 2 to 126; the sequence is SALDNSIRVE…FRLATPGLLH (125 aa).

The sequence is that of Protein ApaG from Shewanella oneidensis (strain ATCC 700550 / JCM 31522 / CIP 106686 / LMG 19005 / NCIMB 14063 / MR-1).